The sequence spans 278 residues: MMSLAEQIEQQQDDAGWSAHLQLRFVQRDGVTRLGAWKHFGPLLVQRPFYPEGAPCHVYVLHPPGGIVAGDRLELDIHLEPGSHALLTMPGASKFYRSIGPTARLTQRFHMATGSTLEWLPQDSIFFSGARASLASRFTLEPGARLLAWETLCLGRPVMHERFDHGALDSLLHIELPDEVGLHERLRLAGGHLGKLGGHPLLATFCAAPADQAVLEQVRPLLDELGNPAGATLLGSLLVIRVLDHDNQHLQRTLQRLWHVLRPAILGLPACPPRIWAT.

This sequence belongs to the UreD family. UreD, UreF and UreG form a complex that acts as a GTP-hydrolysis-dependent molecular chaperone, activating the urease apoprotein by helping to assemble the nickel containing metallocenter of UreC. The UreE protein probably delivers the nickel.

It localises to the cytoplasm. In terms of biological role, required for maturation of urease via the functional incorporation of the urease nickel metallocenter. The chain is Urease accessory protein UreD from Pseudomonas putida (strain ATCC 700007 / DSM 6899 / JCM 31910 / BCRC 17059 / LMG 24140 / F1).